A 191-amino-acid chain; its full sequence is Peptidyl-tRNA hydrolase (191 aa).

Residue tyrosine 17 coordinates tRNA. Histidine 22 functions as the Proton acceptor in the catalytic mechanism. Tyrosine 68, asparagine 70, and asparagine 116 together coordinate tRNA.

The protein belongs to the PTH family. In terms of assembly, monomer.

It localises to the cytoplasm. The enzyme catalyses an N-acyl-L-alpha-aminoacyl-tRNA + H2O = an N-acyl-L-amino acid + a tRNA + H(+). Hydrolyzes ribosome-free peptidyl-tRNAs (with 1 or more amino acids incorporated), which drop off the ribosome during protein synthesis, or as a result of ribosome stalling. Its function is as follows. Catalyzes the release of premature peptidyl moieties from peptidyl-tRNA molecules trapped in stalled 50S ribosomal subunits, and thus maintains levels of free tRNAs and 50S ribosomes. In Francisella tularensis subsp. tularensis (strain FSC 198), this protein is Peptidyl-tRNA hydrolase.